Here is a 186-residue protein sequence, read N- to C-terminus: Ribosome-recycling factor (186 aa).

It belongs to the RRF family.

The protein resides in the cytoplasm. Its function is as follows. Responsible for the release of ribosomes from messenger RNA at the termination of protein biosynthesis. May increase the efficiency of translation by recycling ribosomes from one round of translation to another. This Burkholderia thailandensis (strain ATCC 700388 / DSM 13276 / CCUG 48851 / CIP 106301 / E264) protein is Ribosome-recycling factor.